The primary structure comprises 20 residues: Alkaline phosphatase (20 aa).

In terms of tissue distribution, expressed by the venom gland.

The protein localises to the secreted. It catalyses the reaction a phosphate monoester + H2O = an alcohol + phosphate. Functionally, has hemorrhagic activity. This chain is Alkaline phosphatase, found in Deinagkistrodon acutus (Hundred-pace snake).